Reading from the N-terminus, the 31-residue chain is U14-ctenitoxin-Co1a (31 aa).

In terms of processing, disulfide bonds are present. As to expression, expressed by the venom gland.

The protein localises to the secreted. Its function is as follows. Omega-agatoxins are antagonists of voltage-gated calcium channels (Cav). The polypeptide is U14-ctenitoxin-Co1a (Ctenus ornatus (Brazilian spider)).